Reading from the N-terminus, the 282-residue chain is HTH-type transcriptional activator RhaR (282 aa).

The 99-residue stretch at 179 to 277 (DKLITRLAAS…GMTPSQWRHL (99 aa)) folds into the HTH araC/xylS-type domain. 2 consecutive DNA-binding regions (H-T-H motif) follow at residues 196–217 (DKFC…RQQT) and 244–267 (ISDI…TRET).

Binds DNA as a dimer.

The protein localises to the cytoplasm. Activates expression of the rhaSR operon in response to L-rhamnose. This Shigella dysenteriae serotype 1 (strain Sd197) protein is HTH-type transcriptional activator RhaR.